The primary structure comprises 441 residues: Arginine biosynthesis bifunctional protein ArgJ, mitochondrial (441 aa).

A mitochondrion-targeting transit peptide spans 1–8 (MRISSTLL). Threonine 177, lysine 204, threonine 215, glutamate 301, asparagine 436, and serine 441 together coordinate substrate. Threonine 215 acts as the Nucleophile in catalysis.

This sequence belongs to the ArgJ family. In terms of assembly, heterodimer of an alpha and a beta chain. Post-translationally, the alpha and beta chains are autoproteolytically processed from a single precursor protein within the mitochondrion.

The protein resides in the mitochondrion matrix. The catalysed reaction is N(2)-acetyl-L-ornithine + L-glutamate = N-acetyl-L-glutamate + L-ornithine. The enzyme catalyses L-glutamate + acetyl-CoA = N-acetyl-L-glutamate + CoA + H(+). The protein operates within amino-acid biosynthesis; L-arginine biosynthesis; L-ornithine and N-acetyl-L-glutamate from L-glutamate and N(2)-acetyl-L-ornithine (cyclic): step 1/1. It functions in the pathway amino-acid biosynthesis; L-arginine biosynthesis; N(2)-acetyl-L-ornithine from L-glutamate: step 1/4. Its activity is regulated as follows. Inhibited by ornithine. In terms of biological role, catalyzes two activities which are involved in the cyclic version of arginine biosynthesis: the synthesis of acetylglutamate from glutamate and acetyl-CoA, and of ornithine by transacetylation between acetylornithine and glutamate. In Saccharomyces cerevisiae (strain ATCC 204508 / S288c) (Baker's yeast), this protein is Arginine biosynthesis bifunctional protein ArgJ, mitochondrial.